Here is a 418-residue protein sequence, read N- to C-terminus: MPKRYLFTSESVTEGHPDKVCDQISDTILDALLSQDPASRVAAEVVVNTGLVLLTGEITTKAQVNFVDLVRQKITEIGYTDSDNGFAANSCSVLVALDEQSPDIAQGVDSAQETREEKSDQELDAIGAGDQGLMFGFACNETPELMPLPISLAHRVTRRLAAVRKTQLGYLRPDGKSQVTVTYEDGRPVGIDTILVSTQHDATIGDITDPAAVQAKIKEDLWNAVVLPVFADIDIKPDDNTRFLVNPTGQFVVGGPQGDAGLTGRKIIVDTYGGYSRHGGGAFSGKDPTKVDRSAAYACRYVAKNIVAAGLAEKCEVQLSYAIGVARPVSILIETFGTGKVDEDRLLQVVQENFELRPAGLIQTFGLTKLPGERGGRFYQDVAAYGHFGRTDLDLPWEATDKADLLKQALSPALSGNA.

Residue histidine 16 participates in ATP binding. Aspartate 18 provides a ligand contact to Mg(2+). Glutamate 44 provides a ligand contact to K(+). Positions 57 and 100 each coordinate L-methionine. Residues 100–110 are flexible loop; it reads QSPDIAQGVDS. ATP contacts are provided by residues 174–176, aspartate 259, 265–266, alanine 282, and lysine 286; these read DGK and RK. Aspartate 259 provides a ligand contact to L-methionine. Lysine 290 is a binding site for L-methionine.

Belongs to the AdoMet synthase family. In terms of assembly, homotetramer; dimer of dimers. Mg(2+) serves as cofactor. It depends on K(+) as a cofactor.

The protein localises to the cytoplasm. The catalysed reaction is L-methionine + ATP + H2O = S-adenosyl-L-methionine + phosphate + diphosphate. It participates in amino-acid biosynthesis; S-adenosyl-L-methionine biosynthesis; S-adenosyl-L-methionine from L-methionine: step 1/1. Catalyzes the formation of S-adenosylmethionine (AdoMet) from methionine and ATP. The overall synthetic reaction is composed of two sequential steps, AdoMet formation and the subsequent tripolyphosphate hydrolysis which occurs prior to release of AdoMet from the enzyme. The sequence is that of S-adenosylmethionine synthase from Acaryochloris marina (strain MBIC 11017).